An 89-amino-acid polypeptide reads, in one-letter code: Small ribosomal subunit protein uS14 (89 aa).

The protein belongs to the universal ribosomal protein uS14 family. Part of the 30S ribosomal subunit. Contacts proteins S3 and S10.

Its function is as follows. Binds 16S rRNA, required for the assembly of 30S particles and may also be responsible for determining the conformation of the 16S rRNA at the A site. The protein is Small ribosomal subunit protein uS14 of Azobacteroides pseudotrichonymphae genomovar. CFP2.